A 290-amino-acid polypeptide reads, in one-letter code: Agmatinase (290 aa).

Mn(2+)-binding residues include histidine 112, aspartate 135, histidine 137, aspartate 139, aspartate 216, and aspartate 218.

The protein belongs to the arginase family. Agmatinase subfamily. Mn(2+) is required as a cofactor.

The catalysed reaction is agmatine + H2O = urea + putrescine. The protein operates within amine and polyamine biosynthesis; putrescine biosynthesis via agmatine pathway; putrescine from agmatine: step 1/1. Catalyzes the formation of putrescine from agmatine. The sequence is that of Agmatinase (speB) from Bacillus subtilis (strain 168).